The primary structure comprises 122 residues: Autophagy-related protein 8b (122 aa).

The Phosphatidylethanolamine amidated glycine moiety is linked to residue Gly-117. Positions 118–122 (GSFYC) are cleaved as a propeptide — removed in mature form.

It belongs to the ATG8 family. As to quaternary structure, interacts with ATG4. Interacts with NBR1. Post-translationally, the C-terminal 5 residues are removed by ATG4 to expose Gly-117 at the C-terminus. This Gly-117 forms then a thioester bond with the 'Cys-558' of ATG7 (E1-like activating enzyme) before being transferred to the 'Cys-258' of ATG3 (the specific E2 conjugating enzyme), in order to be finally amidated with phosphatidylethanolamine. This lipid modification anchors ATG8 to autophagosomes. As to expression, constitutively expressed.

The protein localises to the cytoplasmic vesicle. Its subcellular location is the autophagosome membrane. The protein resides in the vacuole membrane. It is found in the cytoplasm. It localises to the cytoskeleton. Its function is as follows. Ubiquitin-like modifier involved in autophagosomes formation. May mediate the delivery of the autophagosomes to the vacuole via the microtubule cytoskeleton. In Arabidopsis thaliana (Mouse-ear cress), this protein is Autophagy-related protein 8b (ATG8B).